A 308-amino-acid chain; its full sequence is Barttin (308 aa).

Residues 1–5 are Cytoplasmic-facing; it reads MADEK. The segment at 1 to 72 is regulates channel membrane trafficking and anion conductance; it reads MADEKTFRIG…VPADSDFQGM (72 aa). A helical transmembrane segment spans residues 6 to 26; the sequence is TFRIGFIVLGLFLLSLGTFLM. Topologically, residues 27–32 are extracellular; sequence SHDRPQ. Residues 33–53 form a helical membrane-spanning segment; it reads VYGTFYAMGSIMVIGGVLWSM. S-palmitoyl cysteine attachment occurs at residues C54 and C56. Residues 54–308 are Cytoplasmic-facing; sequence CQCYPKITFV…ELGFEPDVQG (255 aa). Residues S79 and S107 each carry the phosphoserine modification. Disordered stretches follow at residues 127–149 and 162–308; these read PLLA…HSAQ and LDEK…DVQG. Basic and acidic residues predominate over residues 162 to 171; it reads LDEKEGEKSR. Residues 172 to 183 are compositionally biased toward polar residues; that stretch reads SQSSPPACSQGS. The span at 274–283 shows a compositional bias: acidic residues; the sequence is EEPEQEEEDL. Position 290 is a phosphoserine (S290).

In terms of assembly, interacts with CLCNK channels. Forms heteromers with CLCNKA in the thin ascending limb of Henle and with CLCNKB in the thick ascending limb and more distal segments. In terms of processing, palmitoylation is necessary for activation of plasma membrane-inserted CLC-K/barttin channels. In terms of tissue distribution, expressed along the distal nephron.

The protein localises to the basolateral cell membrane. Functionally, regulatory subunit of anion-selective CLCNKA:BSND and CLCNKB:BSND heteromeric channels involved in basolateral chloride conductance along the nephron to achieve urine concentration and maintain systemic acid-base homeostasis, and in the stria vascularis of the inner ear to establish the endocochlear potential necessary for normal hearing. Most likely acts as a chaperone that allosterically regulates proper sorting of CLCNKA:BSND and CLCNKB:BSND channels at the basolateral plasma membrane domain and functional switch to ion conducting state. Mediates constitutive opening of channel common gates. In Rattus norvegicus (Rat), this protein is Barttin.